Reading from the N-terminus, the 325-residue chain is Lipoyl synthase (325 aa).

A disordered region spans residues 1–31; sequence MASDSDLLDTKPAETRHPEKAHRPDQPTLRK. Basic and acidic residues predominate over residues 8 to 31; that stretch reads LDTKPAETRHPEKAHRPDQPTLRK. [4Fe-4S] cluster contacts are provided by Cys-61, Cys-66, Cys-72, Cys-87, Cys-91, Cys-94, and Ser-300. Positions 73-289 constitute a Radical SAM core domain; sequence WAKKHATFMI…AEIGRAKGFL (217 aa).

It belongs to the radical SAM superfamily. Lipoyl synthase family. [4Fe-4S] cluster is required as a cofactor.

The protein resides in the cytoplasm. The catalysed reaction is [[Fe-S] cluster scaffold protein carrying a second [4Fe-4S](2+) cluster] + N(6)-octanoyl-L-lysyl-[protein] + 2 oxidized [2Fe-2S]-[ferredoxin] + 2 S-adenosyl-L-methionine + 4 H(+) = [[Fe-S] cluster scaffold protein] + N(6)-[(R)-dihydrolipoyl]-L-lysyl-[protein] + 4 Fe(3+) + 2 hydrogen sulfide + 2 5'-deoxyadenosine + 2 L-methionine + 2 reduced [2Fe-2S]-[ferredoxin]. Its pathway is protein modification; protein lipoylation via endogenous pathway; protein N(6)-(lipoyl)lysine from octanoyl-[acyl-carrier-protein]: step 2/2. In terms of biological role, catalyzes the radical-mediated insertion of two sulfur atoms into the C-6 and C-8 positions of the octanoyl moiety bound to the lipoyl domains of lipoate-dependent enzymes, thereby converting the octanoylated domains into lipoylated derivatives. This Methylocella silvestris (strain DSM 15510 / CIP 108128 / LMG 27833 / NCIMB 13906 / BL2) protein is Lipoyl synthase.